The sequence spans 477 residues: Glutamate--tRNA ligase (477 aa).

The short motif at 18 to 28 is the 'HIGH' region element; sequence PSPTGFIHLGN. Residues 128–138 show a composition bias toward basic and acidic residues; that stretch reads PRYDGSWRPEP. A disordered region spans residues 128 to 151; it reads PRYDGSWRPEPGKTLPPVPAGMSP. The 'KMSKS' region motif lies at 250-254; that stretch reads KLSKR. Residue Lys-253 participates in ATP binding.

This sequence belongs to the class-I aminoacyl-tRNA synthetase family. Glutamate--tRNA ligase type 1 subfamily. In terms of assembly, monomer.

Its subcellular location is the cytoplasm. The catalysed reaction is tRNA(Glu) + L-glutamate + ATP = L-glutamyl-tRNA(Glu) + AMP + diphosphate. Functionally, catalyzes the attachment of glutamate to tRNA(Glu) in a two-step reaction: glutamate is first activated by ATP to form Glu-AMP and then transferred to the acceptor end of tRNA(Glu). In Verminephrobacter eiseniae (strain EF01-2), this protein is Glutamate--tRNA ligase.